We begin with the raw amino-acid sequence, 581 residues long: Prolactin receptor (581 aa).

A signal peptide spans 1–24 (MKENAASRVVFILLLFLSVSLLNG). Residues 25–237 (QSPPEKPKLV…NDFPVKDTSM (213 aa)) are Extracellular-facing. Fibronectin type-III domains are found at residues 27 to 127 (PPEK…IVEP) and 129 to 229 (PPAN…IPND). A disulfide bridge connects residues C36 and C46. N-linked (GlcNAc...) asparagine glycosylation occurs at N59. C75 and C86 are disulfide-bonded. Residue N132 is glycosylated (N-linked (GlcNAc...) asparagine). Zn(2+) is bound by residues D211 and H212. Residues 215–219 (WSEWS) carry the WSXWS motif motif. The chain crosses the membrane as a helical span at residues 238-258 (WIFVAILSAVICLIMVWAVAL). Over 259 to 581 (KGYSMVTCIL…PAKKAPPALP (323 aa)) the chain is Cytoplasmic. Residues 267 to 275 (ILPPVPGPK) carry the Box 1 motif motif. Disordered stretches follow at residues 324-384 (QLMP…EKLE) and 458-499 (DQHA…PRPQ). 3 stretches are compositionally biased toward basic and acidic residues: residues 329–349 (PSKE…DSDS), 375–384 (HTPEGPEKLE), and 469–483 (ETGR…RESE).

The protein belongs to the type I cytokine receptor family. Type 1 subfamily. In terms of assembly, interacts with SMARCA1. Interacts with NEK3 and VAV2 and this interaction is prolactin-dependent. As to expression, expressed in all tissues examined; liver, peripheral blood lymphocytes, endometrium, corpus luteum, intestine, fetal thymus, fetal spleen, fetal liver and fetal brain.

Its subcellular location is the membrane. Functionally, this is a receptor for the anterior pituitary hormone prolactin. The protein is Prolactin receptor (PRLR) of Bos taurus (Bovine).